The following is a 36-amino-acid chain: Gloverin (36 aa).

Its subcellular location is the secreted. Its function is as follows. Antibacterial protein. In Heliothis virescens (Tobacco budworm moth), this protein is Gloverin.